A 66-amino-acid polypeptide reads, in one-letter code: COP9 signalosome complex subunit 6a (66 aa).

The protein belongs to the peptidase M67A family. CSN6 subfamily. In terms of assembly, component of the CSN complex, probably composed of CSN1, CSN2, CSN3, CSN4, CSN5 (CSN5A or CSN5B), CSN6 (CSN6A or CSN6B), CSN7 and CSN8.

Its subcellular location is the cytoplasm. The protein resides in the nucleus. Component of the COP9 signalosome complex (CSN), a complex involved in various cellular and developmental processes such as photomorphogenesis and auxin and jasmonate responses. The CSN complex is an essential regulator of the ubiquitin (Ubl) conjugation pathway by mediating the deneddylation of the cullin subunits of SCF-type E3 ligase complexes, leading to decrease the Ubl ligase activity of SCF. It is involved in repression of photomorphogenesis in darkness by regulating the activity of COP1-containing Ubl ligase complexes. The chain is COP9 signalosome complex subunit 6a (CSN6A) from Brassica oleracea (Wild cabbage).